A 348-amino-acid chain; its full sequence is Glucokinase (348 aa).

14–19 serves as a coordination point for ATP; that stretch reads GDVGGS. The segment at 327 to 348 is disordered; that stretch reads SDPAPVAAPTHPRGGTAGDMHA.

This sequence belongs to the bacterial glucokinase family.

The protein localises to the cytoplasm. It carries out the reaction D-glucose + ATP = D-glucose 6-phosphate + ADP + H(+). The chain is Glucokinase from Chromobacterium violaceum (strain ATCC 12472 / DSM 30191 / JCM 1249 / CCUG 213 / NBRC 12614 / NCIMB 9131 / NCTC 9757 / MK).